Here is a 276-residue protein sequence, read N- to C-terminus: 4-chlorobenzoyl coenzyme A dehalogenase-1 (276 aa).

Position 66 to 71 (66 to 71 (AGFDLE)) interacts with substrate. Residue H93 is the Proton acceptor of the active site. A substrate-binding site is contributed by G117. D148 functions as the Nucleophile in the catalytic mechanism. R261 provides a ligand contact to substrate.

The protein belongs to the enoyl-CoA hydratase/isomerase family. As to quaternary structure, homotetramer.

It carries out the reaction 4-chlorobenzoyl-CoA + H2O = 4-hydroxybenzoyl-CoA + chloride + H(+). The protein operates within xenobiotic degradation; 4-chlorobenzoate degradation; 4-hydroxybenzoate from 4-chlorobenzoate: step 2/3. Its function is as follows. Dehalogenates 4-chlorobenzoyl-CoA, 4-iodobenzoyl-CoA, 4-bromobenzoyl-CoA and, at a slower rate, 4-fluorobenzoyl-CoA. Does not dehalogenate 2-chlorobenzoyl-CoA or 3-chlorobenzoyl-CoA. This Arthrobacter sp protein is 4-chlorobenzoyl coenzyme A dehalogenase-1.